Here is a 398-residue protein sequence, read N- to C-terminus: Elongation factor Tu (398 aa).

In terms of domain architecture, tr-type G spans 10–207 (KPHVNIGTIG…TVDEYIPEPE (198 aa)). The interval 19 to 26 (GHVDHGKT) is G1. 19–26 (GHVDHGKT) contacts GTP. Thr26 serves as a coordination point for Mg(2+). A G2 region spans residues 63 to 67 (GITIN). The G3 stretch occupies residues 84–87 (DAPG). Residues 84–88 (DAPGH) and 139–142 (NKVD) contribute to the GTP site. The tract at residues 139–142 (NKVD) is G4. Residues 177 to 179 (SAL) form a G5 region.

This sequence belongs to the TRAFAC class translation factor GTPase superfamily. Classic translation factor GTPase family. EF-Tu/EF-1A subfamily. As to quaternary structure, monomer.

It is found in the cytoplasm. The catalysed reaction is GTP + H2O = GDP + phosphate + H(+). In terms of biological role, GTP hydrolase that promotes the GTP-dependent binding of aminoacyl-tRNA to the A-site of ribosomes during protein biosynthesis. This chain is Elongation factor Tu, found in Streptococcus pneumoniae serotype 4 (strain ATCC BAA-334 / TIGR4).